The following is a 223-amino-acid chain: Putative thymidylate synthase (223 aa).

Cys-146 is an active-site residue.

Belongs to the thymidylate synthase family. Archaeal-type ThyA subfamily. As to quaternary structure, monomer.

It localises to the cytoplasm. The protein operates within pyrimidine metabolism; dTTP biosynthesis. In terms of biological role, may catalyze the biosynthesis of dTMP using an unknown cosubstrate. In vitro, also catalyzes the dehalogenation of 5-bromo-deoxyuridine monophosphate (Br-dUMP) and the tritium exchange of [5-3H]deoxyuridine monophosphate ([5-3H]dUMP). The chain is Putative thymidylate synthase (thyA) from Methanothermobacter marburgensis (strain ATCC BAA-927 / DSM 2133 / JCM 14651 / NBRC 100331 / OCM 82 / Marburg) (Methanobacterium thermoautotrophicum).